Consider the following 456-residue polypeptide: tRNA modification GTPase MnmE (456 aa).

Arg24, Glu81, and Lys120 together coordinate (6S)-5-formyl-5,6,7,8-tetrahydrofolate. Residues 216–379 (GMTVVIAGRP…LRDHLKACMG (164 aa)) enclose the TrmE-type G domain. Asn226 contacts K(+). GTP is bound by residues 226–231 (NAGKSS), 245–251 (TDIAGTT), 270–273 (DTAG), and 335–338 (NKAD). Ser230 contacts Mg(2+). Residues Thr245, Ile247, and Thr250 each coordinate K(+). Thr251 is a Mg(2+) binding site. Residue Lys456 coordinates (6S)-5-formyl-5,6,7,8-tetrahydrofolate.

This sequence belongs to the TRAFAC class TrmE-Era-EngA-EngB-Septin-like GTPase superfamily. TrmE GTPase family. In terms of assembly, homodimer. Heterotetramer of two MnmE and two MnmG subunits. K(+) serves as cofactor.

Its subcellular location is the cytoplasm. Exhibits a very high intrinsic GTPase hydrolysis rate. Involved in the addition of a carboxymethylaminomethyl (cmnm) group at the wobble position (U34) of certain tRNAs, forming tRNA-cmnm(5)s(2)U34. This chain is tRNA modification GTPase MnmE, found in Pseudomonas putida (strain GB-1).